We begin with the raw amino-acid sequence, 590 residues long: Probable metalloendopeptidase G1-type (590 aa).

Residue His41 coordinates Zn(2+). Residue Glu44 is part of the active site. His45 lines the Zn(2+) pocket.

The protein belongs to the peptidase M44 family. Zn(2+) serves as cofactor.

Seems to be involved in viral proteins maturation by cleavage at Ala-Gly-|-Xaa motifs. The sequence is that of Probable metalloendopeptidase G1-type from Homo sapiens (Human).